The chain runs to 301 residues: Nucleotide-binding protein MAB_2783c (301 aa).

Position 24–31 (24–31) interacts with ATP; the sequence is GLSGAGRG. 75 to 78 contacts GTP; that stretch reads DVRS.

It belongs to the RapZ-like family.

Its function is as follows. Displays ATPase and GTPase activities. The chain is Nucleotide-binding protein MAB_2783c from Mycobacteroides abscessus (strain ATCC 19977 / DSM 44196 / CCUG 20993 / CIP 104536 / JCM 13569 / NCTC 13031 / TMC 1543 / L948) (Mycobacterium abscessus).